Here is a 585-residue protein sequence, read N- to C-terminus: Folylpolyglutamate synthase, mitochondrial (585 aa).

Residues 1–39 (MSRARCHALFLAAVSPRGATTRVAVRRGLSAWPVLQEPD) constitute a mitochondrion transit peptide. 103–106 (GKGS) contributes to the ATP binding site. 3 residues coordinate Mg(2+): Ser127, Glu198, and His226. 2 residues coordinate ATP: Arg361 and Asp375. Positions 477–497 (EEQVSPDPWSTPGQEQDGPAS) are disordered. A Phosphoserine modification is found at Ser537.

It belongs to the folylpolyglutamate synthase family. In terms of assembly, monomer. It depends on a monovalent cation as a cofactor.

It is found in the mitochondrion inner membrane. The protein localises to the mitochondrion matrix. Its subcellular location is the cytoplasm. The catalysed reaction is (6S)-5,6,7,8-tetrahydrofolyl-(gamma-L-Glu)(n) + L-glutamate + ATP = (6S)-5,6,7,8-tetrahydrofolyl-(gamma-L-Glu)(n+1) + ADP + phosphate + H(+). Its pathway is cofactor biosynthesis; tetrahydrofolylpolyglutamate biosynthesis. Catalyzes conversion of folates to polyglutamate derivatives allowing concentration of folate compounds in the cell and the intracellular retention of these cofactors, which are important substrates for most of the folate-dependent enzymes that are involved in one-carbon transfer reactions involved in purine, pyrimidine and amino acid synthesis. The chain is Folylpolyglutamate synthase, mitochondrial (FPGS) from Bos taurus (Bovine).